A 220-amino-acid polypeptide reads, in one-letter code: Vesicle-associated membrane protein 7 (220 aa).

Ala2 bears the N-acetylalanine mark. The Cytoplasmic portion of the chain corresponds to 2-188; it reads AILFAVVARG…ARAMCMKNIK (187 aa). One can recognise a Longin domain in the interval 7-110; that stretch reads VVARGTTILA…AMNSEFSSVL (104 aa). The region spanning 125–185 is the v-SNARE coiled-coil homology domain; the sequence is KVMETQAQVD…RNLARAMCMK (61 aa). Ser167 and Ser168 each carry phosphoserine. A helical; Anchor for type IV membrane protein transmembrane segment spans residues 189–209; that stretch reads LTIIIIIVSIVFIYIIVSLLC. Residues 210–220 are Vesicular-facing; that stretch reads GGFTWPNCVKK.

Belongs to the synaptobrevin family. Component of the SNARE complex composed of STX4, SNAP23 and VAMP7 that binds SYT7 during lysosomal exocytosis. Component of the SNARE complex composed of STX7, STX8, VAMP7 and VTI1B that is required for heterotypic fusion of late endosomes with lysosomes. May interact with STX17. Interacts with PICALM. Interacts with RAB21.

The protein resides in the cytoplasmic vesicle. Its subcellular location is the secretory vesicle membrane. It localises to the golgi apparatus. The protein localises to the trans-Golgi network membrane. It is found in the late endosome membrane. The protein resides in the lysosome membrane. Its subcellular location is the endoplasmic reticulum membrane. It localises to the phagosome membrane. The protein localises to the synapse. It is found in the synaptosome. Functionally, involved in the targeting and/or fusion of transport vesicles to their target membrane during transport of proteins from the early endosome to the lysosome. Required for heterotypic fusion of late endosomes with lysosomes and homotypic lysosomal fusion. Required for calcium regulated lysosomal exocytosis. Involved in the export of chylomicrons from the endoplasmic reticulum to the cis Golgi. Required for exocytosis of mediators during eosinophil and neutrophil degranulation, and target cell killing by natural killer cells. Required for focal exocytosis of late endocytic vesicles during phagosome formation. The chain is Vesicle-associated membrane protein 7 (Vamp7) from Mus musculus (Mouse).